We begin with the raw amino-acid sequence, 352 residues long: Galactokinase (352 aa).

14 to 17 (EHTD) lines the substrate pocket. ATP-binding positions include Ser46 and 96 to 102 (GAGLSSS). Residues Ser102 and Glu134 each coordinate Mg(2+). Asp146 functions as the Proton acceptor in the catalytic mechanism. Residue Tyr196 coordinates substrate.

The protein belongs to the GHMP kinase family. GalK subfamily.

The protein resides in the cytoplasm. It catalyses the reaction alpha-D-galactose + ATP = alpha-D-galactose 1-phosphate + ADP + H(+). Its pathway is carbohydrate metabolism; galactose metabolism. Its function is as follows. Catalyzes the transfer of the gamma-phosphate of ATP to D-galactose to form alpha-D-galactose-1-phosphate (Gal-1-P). This is Galactokinase from Thermosipho africanus (strain TCF52B).